A 249-amino-acid chain; its full sequence is General transcription factor IIF subunit 2 (249 aa).

The residue at position 2 (A2) is an N-acetylalanine. Residues K22, K33, and K137 each carry the N6-acetyllysine modification. S142 is modified (phosphoserine). DNA is bound by residues G227 and H229. Phosphoserine is present on S248.

It belongs to the TFIIF beta subunit family. In terms of assembly, heterodimer of an alpha and a beta subunit. Interacts with HTATSF1 and GPBP1. Interacts with URI1. Interacts with GTF2B (via N-terminus); this interaction is inhibited in presence of GTF2F1. Part of TBP-based Pol II pre-initiation complex (PIC), in which Pol II core assembles with general transcription factors and other specific initiation factors including GTF2E1, GTF2E2, GTF2F1, GTF2F2, TCEA1, ERCC2, ERCC3, GTF2H2, GTF2H3, GTF2H4, GTF2H5, GTF2A1, GTF2A2, GTF2B and TBP; this large multi-subunit PIC complex mediates DNA unwinding and targets Pol II core to the transcription start site where the first phosphodiester bond forms.

The protein localises to the nucleus. TFIIF is a general transcription initiation factor that binds to RNA polymerase II and helps to recruit it to the initiation complex in collaboration with TFIIB. It promotes transcription elongation. This chain is General transcription factor IIF subunit 2 (Gtf2f2), found in Rattus norvegicus (Rat).